Reading from the N-terminus, the 406-residue chain is Multifunctional CCA protein (406 aa).

Gly8 and Arg11 together coordinate ATP. CTP is bound by residues Gly8 and Arg11. Residues Asp21 and Asp23 each contribute to the Mg(2+) site. ATP is bound by residues Arg91, Arg138, and Arg141. CTP contacts are provided by Arg91, Arg138, and Arg141. An HD domain is found at 229–331; it reads TGIHQEMVSD…LELLGRCDAL (103 aa).

It belongs to the tRNA nucleotidyltransferase/poly(A) polymerase family. Bacterial CCA-adding enzyme type 1 subfamily. Monomer. Can also form homodimers and oligomers. The cofactor is Mg(2+). Requires Ni(2+) as cofactor.

The enzyme catalyses a tRNA precursor + 2 CTP + ATP = a tRNA with a 3' CCA end + 3 diphosphate. It catalyses the reaction a tRNA with a 3' CCA end + 2 CTP + ATP = a tRNA with a 3' CCACCA end + 3 diphosphate. In terms of biological role, catalyzes the addition and repair of the essential 3'-terminal CCA sequence in tRNAs without using a nucleic acid template. Adds these three nucleotides in the order of C, C, and A to the tRNA nucleotide-73, using CTP and ATP as substrates and producing inorganic pyrophosphate. tRNA 3'-terminal CCA addition is required both for tRNA processing and repair. Also involved in tRNA surveillance by mediating tandem CCA addition to generate a CCACCA at the 3' terminus of unstable tRNAs. While stable tRNAs receive only 3'-terminal CCA, unstable tRNAs are marked with CCACCA and rapidly degraded. This is Multifunctional CCA protein from Stenotrophomonas maltophilia (strain K279a).